Consider the following 384-residue polypeptide: GTPase Obg (384 aa).

The Obg domain maps to 1–159 (MKFIDEAKIE…RSLQLELKVL (159 aa)). Positions 20 to 46 (ATSFRREKFVPRGGPDGGDGGKGGSVW) are disordered. The span at 33–43 (GPDGGDGGKGG) shows a compositional bias: gly residues. The 189-residue stretch at 160–348 (ADVGLLGMPN…LVHQINQYLI (189 aa)) folds into the OBG-type G domain. GTP contacts are provided by residues 166–173 (GMPNAGKS), 191–195 (FTTLH), 213–216 (DIPG), 284–287 (NKLD), and 329–331 (SAL). Mg(2+)-binding residues include S173 and T193. Residues 364–384 (ATNVEIAEQQPKTDTGVFKPE) are disordered.

The protein belongs to the TRAFAC class OBG-HflX-like GTPase superfamily. OBG GTPase family. As to quaternary structure, monomer. Mg(2+) is required as a cofactor.

It localises to the cytoplasm. Its function is as follows. An essential GTPase which binds GTP, GDP and possibly (p)ppGpp with moderate affinity, with high nucleotide exchange rates and a fairly low GTP hydrolysis rate. Plays a role in control of the cell cycle, stress response, ribosome biogenesis and in those bacteria that undergo differentiation, in morphogenesis control. The protein is GTPase Obg of Neisseria meningitidis serogroup A / serotype 4A (strain DSM 15465 / Z2491).